Consider the following 481-residue polypeptide: Protein nucleotidyltransferase YdiU (481 aa).

ATP-binding residues include Gly85, Gly87, Arg88, Lys108, Asp120, Gly121, Arg172, and Arg179. Asp248 acts as the Proton acceptor in catalysis. Positions 249 and 258 each coordinate Mg(2+). An ATP-binding site is contributed by Asp258.

This sequence belongs to the SELO family. Mg(2+) serves as cofactor. Requires Mn(2+) as cofactor.

It catalyses the reaction L-seryl-[protein] + ATP = 3-O-(5'-adenylyl)-L-seryl-[protein] + diphosphate. The enzyme catalyses L-threonyl-[protein] + ATP = 3-O-(5'-adenylyl)-L-threonyl-[protein] + diphosphate. The catalysed reaction is L-tyrosyl-[protein] + ATP = O-(5'-adenylyl)-L-tyrosyl-[protein] + diphosphate. It carries out the reaction L-histidyl-[protein] + UTP = N(tele)-(5'-uridylyl)-L-histidyl-[protein] + diphosphate. It catalyses the reaction L-seryl-[protein] + UTP = O-(5'-uridylyl)-L-seryl-[protein] + diphosphate. The enzyme catalyses L-tyrosyl-[protein] + UTP = O-(5'-uridylyl)-L-tyrosyl-[protein] + diphosphate. In terms of biological role, nucleotidyltransferase involved in the post-translational modification of proteins. It can catalyze the addition of adenosine monophosphate (AMP) or uridine monophosphate (UMP) to a protein, resulting in modifications known as AMPylation and UMPylation. The sequence is that of Protein nucleotidyltransferase YdiU from Cereibacter sphaeroides (strain KD131 / KCTC 12085) (Rhodobacter sphaeroides).